We begin with the raw amino-acid sequence, 318 residues long: DNA repair nuclease/redox regulator APEX1 (318 aa).

Residues Met-1 to Asn-33 form a necessary for interaction with YBX1, binding to RNA, association together with NPM1 to rRNA, endoribonuclease activity on abasic RNA and localization in the nucleoli region. A disordered region spans residues Met-1–Ala-60. Lys-6 and Lys-7 each carry N6-acetyllysine; by EP300. The short motif at Gly-8 to Asp-13 is the Nuclear localization signal (NLS) element. A compositionally biased stretch (basic and acidic residues) spans Glu-16–Ala-38. Residues Ala-23–Asn-33 form a necessary for interaction with NPM1 and for efficient rRNA binding region. N6-acetyllysine is present on residues Lys-27, Lys-31, Lys-32, and Lys-35. Ser-54 bears the Phosphoserine mark. Residues Ile-64–Gly-80 carry the Nuclear export signal (NES) motif. An S-nitrosocysteine; alternate modification is found at Cys-65. A disulfide bond links Cys-65 and Cys-93. Asp-70 contacts Mg(2+). An S-nitrosocysteine; alternate modification is found at Cys-93. Glu-96 is a Mg(2+) binding site. Residue Tyr-171 is part of the active site. Position 197 is an N6-acetyllysine (Lys-197). 2 residues coordinate Mg(2+): Asp-210 and Asn-212. The active-site Proton donor/acceptor is Asp-210. Thr-233 is modified (phosphothreonine; by CDK5). The interval His-289–Leu-318 is mitochondrial targeting sequence (MTS). Mg(2+) is bound at residue Asp-308. Cys-310 carries the S-nitrosocysteine modification.

It belongs to the DNA repair enzymes AP/ExoA family. Monomer. Homodimer; disulfide-linked. Component of the SET complex, composed of at least APEX1, SET, ANP32A, HMGB2, NME1 and TREX1. Associates with the dimer XRCC5/XRCC6 in a DNA-dependent manner. Interacts with SIRT1; the interaction is increased in the context of genotoxic stress. Interacts with HDAC1, HDAC2 and HDAC3; the interactions are not dependent on the APEX1 acetylation status. Interacts with XRCC1; the interaction is induced by SIRT1 and increased with the APEX1 acetylated form. Interacts with NPM1 (via N-terminal domain); the interaction is RNA-dependent and decreases in hydrogen peroxide-damaged cells. Interacts (via N-terminus) with YBX1 (via C-terminus); the interaction is increased in presence of APEX1 acetylated at Lys-6 and Lys-7. Interacts with HNRNPL; the interaction is DNA-dependent. Interacts (via N-terminus) with KPNA1 and KPNA2. Interacts with TXN; the interaction stimulates the FOS/JUN AP-1 complex DNA-binding activity in a redox-dependent manner. Interacts with GZMA, KRT8, MDM2, POLB, PRDX6, PRPF19, RPLP0, TOMM20 and WDR77. Binds to CDK5. Requires Mg(2+) as cofactor. Mn(2+) is required as a cofactor. Phosphorylated. Phosphorylation by kinase PKC or casein kinase CK2 results in enhanced redox activity that stimulates binding of the FOS/JUN AP-1 complex to its cognate binding site. AP-endodeoxyribonuclease activity is not affected by CK2-mediated phosphorylation. Phosphorylation of Thr-233 by CDK5 in response to MPP(+)/MPTP (1-methyl-4-phenylpyridinium) reduces AP-endodeoxyribonuclease activity resulting in accumulation of DNA damage and contributing to neuronal death. Post-translationally, acetylated on Lys-6 and Lys-7. Acetylation is increased by the transcriptional coactivator EP300 acetyltransferase, genotoxic agents like H(2)O(2) and methyl methanesulfonate (MMS). Acetylation increases its binding affinity to the negative calcium response element (nCaRE) DNA promoter. The acetylated form induces a stronger binding of YBX1 to the Y-box sequence in the MDR1 promoter than the unacetylated form. Deacetylated on lysines. Lys-6 and Lys-7 are deacetylated by SIRT1. In terms of processing, cleaved at Lys-31 by granzyme A to create the mitochondrial form; leading in reduction of binding to DNA, AP endodeoxyribonuclease activity, redox activation of transcription factors and to enhanced cell death. Cleaved by granzyme K; leading to intracellular ROS accumulation and enhanced cell death after oxidative stress. Cys-69 and Cys-93 are nitrosylated in response to nitric oxide (NO) and lead to the exposure of the nuclear export signal (NES). Post-translationally, ubiquitinated by MDM2; leading to translocation to the cytoplasm and proteasomal degradation.

The protein localises to the nucleus. It is found in the nucleolus. The protein resides in the nucleus speckle. Its subcellular location is the endoplasmic reticulum. It localises to the cytoplasm. The protein localises to the mitochondrion. The enzyme catalyses Exonucleolytic cleavage in the 3'- to 5'-direction to yield nucleoside 5'-phosphates.. NPM1 stimulates endodeoxyribonuclease activity on double-stranded DNA with AP sites, but inhibits endoribonuclease activity on single-stranded RNA containing AP sites. Multifunctional protein that plays a central role in the cellular response to oxidative stress. The two major activities of APEX1 are DNA repair and redox regulation of transcriptional factors. Functions as an apurinic/apyrimidinic (AP) endodeoxyribonuclease in the DNA base excision repair (BER) pathway of DNA lesions induced by oxidative and alkylating agents. Initiates repair of AP sites in DNA by catalyzing hydrolytic incision of the phosphodiester backbone immediately adjacent to the damage, generating a single-strand break with 5'-deoxyribose phosphate and 3'-hydroxyl ends. Also incises at AP sites in the DNA strand of DNA/RNA hybrids, single-stranded DNA regions of R-loop structures, and single-stranded RNA molecules. Has 3'-5' exoribonuclease activity on mismatched deoxyribonucleotides at the 3' termini of nicked or gapped DNA molecules during short-patch BER. Possesses DNA 3' phosphodiesterase activity capable of removing lesions (such as phosphoglycolate) blocking the 3' side of DNA strand breaks. May also play a role in the epigenetic regulation of gene expression by participating in DNA demethylation. Acts as a loading factor for POLB onto non-incised AP sites in DNA and stimulates the 5'-terminal deoxyribose 5'-phosphate (dRp) excision activity of POLB. Plays a role in the protection from granzyme-mediated cellular repair leading to cell death. Also involved in the DNA cleavage step of class switch recombination (CSR). On the other hand, APEX1 also exerts reversible nuclear redox activity to regulate DNA binding affinity and transcriptional activity of transcriptional factors by controlling the redox status of their DNA-binding domain, such as the FOS/JUN AP-1 complex after exposure to IR. Involved in calcium-dependent down-regulation of parathyroid hormone (PTH) expression by binding to negative calcium response elements (nCaREs). Together with HNRNPL or the dimer XRCC5/XRCC6, associates with nCaRE, acting as an activator of transcriptional repression. Stimulates the YBX1-mediated MDR1 promoter activity, when acetylated at Lys-6 and Lys-7, leading to drug resistance. Also acts as an endoribonuclease involved in the control of single-stranded RNA metabolism. Plays a role in regulating MYC mRNA turnover by preferentially cleaving in between UA and CA dinucleotides of the MYC coding region determinant (CRD). In association with NMD1, plays a role in the rRNA quality control process during cell cycle progression. Associates, together with YBX1, on the MDR1 promoter. Together with NPM1, associates with rRNA. Binds DNA and RNA. The chain is DNA repair nuclease/redox regulator APEX1 (APEX1) from Gorilla gorilla gorilla (Western lowland gorilla).